We begin with the raw amino-acid sequence, 553 residues long: 2-succinyl-5-enolpyruvyl-6-hydroxy-3-cyclohexene-1-carboxylate synthase (553 aa).

This sequence belongs to the TPP enzyme family. MenD subfamily. In terms of assembly, homodimer. Mg(2+) serves as cofactor. Requires Mn(2+) as cofactor. Thiamine diphosphate is required as a cofactor.

It carries out the reaction isochorismate + 2-oxoglutarate + H(+) = 5-enolpyruvoyl-6-hydroxy-2-succinyl-cyclohex-3-ene-1-carboxylate + CO2. It participates in quinol/quinone metabolism; 1,4-dihydroxy-2-naphthoate biosynthesis; 1,4-dihydroxy-2-naphthoate from chorismate: step 2/7. The protein operates within quinol/quinone metabolism; menaquinone biosynthesis. Its function is as follows. Catalyzes the thiamine diphosphate-dependent decarboxylation of 2-oxoglutarate and the subsequent addition of the resulting succinic semialdehyde-thiamine pyrophosphate anion to isochorismate to yield 2-succinyl-5-enolpyruvyl-6-hydroxy-3-cyclohexene-1-carboxylate (SEPHCHC). This is 2-succinyl-5-enolpyruvyl-6-hydroxy-3-cyclohexene-1-carboxylate synthase from Thermobifida fusca (strain YX).